Here is a 447-residue protein sequence, read N- to C-terminus: Phosphoglucosamine mutase (447 aa).

The Phosphoserine intermediate role is filled by S104. Mg(2+) contacts are provided by S104, D243, D245, and D247. S104 carries the post-translational modification Phosphoserine.

This sequence belongs to the phosphohexose mutase family. Mg(2+) serves as cofactor. In terms of processing, activated by phosphorylation.

It catalyses the reaction alpha-D-glucosamine 1-phosphate = D-glucosamine 6-phosphate. Functionally, catalyzes the conversion of glucosamine-6-phosphate to glucosamine-1-phosphate. In Corynebacterium glutamicum (strain R), this protein is Phosphoglucosamine mutase.